Reading from the N-terminus, the 276-residue chain is MPDYAIGDVQGCYDPLQRLLELIDFNEKEDCLWFVGDLVNRGPDSLAVLRFIYSLPVKPKITLGNHDLHLLGLLFGGQPWKGHDDTLEEVMLADDGEELGHWLRKQSLLCRSSELNIVMCHAGIAPLWDLSKAMDLANELEAVLSGDSYHEFFAQMYGNKPDIWSDDLVGLDRLRVITNYFTRMRYCDAHGRLDLGYKGTLSKAPNHLYPWFEVPCRKEIEMDIVFGHWAALMGRSSHPRIHAIDTGCLWGGQLTALRLQDRQRFSVPGYGVSRFE.

This sequence belongs to the Ap4A hydrolase family.

The catalysed reaction is P(1),P(4)-bis(5'-adenosyl) tetraphosphate + H2O = 2 ADP + 2 H(+). Hydrolyzes diadenosine 5',5'''-P1,P4-tetraphosphate to yield ADP. This Legionella pneumophila subsp. pneumophila (strain Philadelphia 1 / ATCC 33152 / DSM 7513) protein is Bis(5'-nucleosyl)-tetraphosphatase, symmetrical.